The following is a 1011-amino-acid chain: PE-PGRS family protein PE_PGRS30 (1011 aa).

A PE domain is found at 1–93 (MSFLLVEPDL…AAAYTGAEAA (93 aa)). Residues 130-696 (SNAGGNGGPG…GGTGGTGGVL (567 aa)) are PGRS domain. A compositionally biased stretch (gly residues) spans 595–696 (GGAGGTGGDH…GGTGGTGGVL (102 aa)). The interval 595 to 701 (GGAGGTGGDH…TGGVLFGQSG (107 aa)) is disordered. Residues 697–1011 (FGQSGSSGPP…PTQLAQAIAP (315 aa)) form a C-terminal domain region.

The protein belongs to the mycobacterial PE family. PGRS subfamily.

It localises to the secreted. The protein localises to the cell wall. It is found in the cell surface. Mediates suppression of pro-inflammatory immune response in macrophages via modulation of host cytokine response. Required for full virulence. Involved in inhibition of phago-lysosome fusion. In Mycobacterium tuberculosis (strain ATCC 25618 / H37Rv), this protein is PE-PGRS family protein PE_PGRS30.